A 2554-amino-acid chain; its full sequence is MTMFWQQNVDHQSDEQDKQAKGAAPTKRLNISFNVKIAVNVNTKMTTTHINQQAPGTSSSSSNSQNASPSKIVVRQQSSSFDLRQQLARLGRQLASGQDGHGGISTILIINLLLLILLSICCDVCRSHNYTVHQSPEPVSKDQMRLLRPKLDSDVVEKVAIWHKHAAAAPPSIVEGIAISSRPQSTMAHHPDDRDRDRDPSEEQHGVDERMVLERVTRDCVQRCIVEEDLFLDEFGIQCEKADNGEKCYKTRCTKGCAQWYRALKELESCQEACLSLQFYPYDMPCIGACEMAQRDYWHLQRLAISHLVERTQPQLERAPRADGQSTPLTIRWAMHFPEHYLASRPFNIQYQFVDHHGEELDLEQEDQDASGETGSSAWFNLADYDCDEYYVCEILEALIPYTQYRFRFELPFGENRDEVLYSPATPAYQTPPEGAPISAPVIEHLMGLDDSHLAVHWHPGRFTNGPIEGYRLRLSSSEGNATSEQLVPAGRGSYIFSQLQAGTNYTLALSMINKQGEGPVAKGFVQTHSARNEKPAKDLTESVLLVGRRAVMWQSLEPAGENSMIYQSQEELADIAWSKREQQLWLLNVHGELRSLKFESGQMVSPAQQLKLDLGNISSGRWVPRRLSFDWLHHRLYFAMESPERNQSSFQIISTDLLGESAQKVGESFDLPVEQLEVDALNGWIFWRNEESLWRQDLHGRMIHRLLRIRQPGWFLVQPQHFIIHLMLPQEGKFLEISYDGGFKHPLPLPPPSNGAGNGPASSHWQSFALLGRSLLLPDSGQLILVEQQGQAASPSASWPLKNLPDCWAVILLVPESQPLTSAGGKPHSLKALLGAQAAKISWKEPERNPYQSADAARSWSYELEVLDVASQSAFSIRNIRGPIFGLQRLQPDNLYQLRVRAINVDGEPGEWTEPLAARTWPLGPHRLRWASRQGSVIHTNELGEGLEVQQEQLERLPGPMTMVNESVGYYVTGDGLLHCINLVHSQWGCPISEPLQHVGSVTYDWRGGRVYWTDLARNCVVRMDPWSGSRELLPVFEANFLALDPRQGHLYYATSSQLSRHGSTPDEAVTYYRVNGLEGSIASFVLDTQQDQLFWLVKGSGALRLYRAPLTAGGDSLQMIQQIKGVFQAVPDSLQLLRPLGALLWLERSGRRARLVRLAAPLDVMELPTPDQASPASALQLLDPQPLPPRDEGVIPMTVLPDSVRLDDGHWDDFHVRWQPSTSGGNHSVSYRLLLEFGQRLQTLDLSTPFARLTQLPQAQLQLKISITPRTAWRSGDTTRVQLTTPPVAPSQPRRLRVFVERLATALQEANVSAVLRWDAPEQGQEAPMQALEYHISCWVGSELHEELRLNQSALEARVEHLQPDQTYHFQVEARVAATGAAAGAASHALHVAPEVQAVPRVLYANAEFIGELDLDTRNRRRLVHTASPVEHLVGIEGEQRLLWVNEHVELLTHVPGSAPAKLARMRAEVLALAVDWIQRIVYWAELDATAPQAAIIYRLDLCNFEGKILQGERVWSTPRGRLLKDLVALPQAQSLIWLEYEQGSPRNGSLRGRNLTDGSELEWATVQPLIRLHAGSLEPGSETLNLVDNQGKLCVYDVARQLCTASALRAQLNLLGEDSIAGQLAQDSGYLYAVKNWSIRAYGRRRQQLEYTVELEPEEVRLLQAHNYQAYPPKNCLLLPSSGGSLLKATDCEEQRCLLNLPMITASEDCPLPIPGVRYQLNLTLARGPGSEEHDHGVEPLGQWLLGAGESLNLTDLLPFTRYRVSGILSSFYQKKLALPTLVLAPLELLTASATPSPPRNFSVRVLSPRELEVSWLPPEQLRSESVYYTLHWQQELDGENVQDRREWEAHERRLETAGTHRLTGIKPGSGYSLWVQAHATPTKSNSSERLHVRSFAELPELQLLELGPYSLSLTWAGTPDPLGSLQLECRSSAEQLRRNVAGNHTKMVVEPLQPRTRYQCRLLLGYAATPGAPLYHGTAEVYETLGDAPSQPGKPQLEHIAEEVFRVTWTAARGNGAPIALYNLEALQARSDIRRRRRRRRRNSGGSLEQLPWAEEPVVVEDQWLDFCNTTELSCIVKSLHSSRLLLFRVRARSLEHGWGPYSEESERVAEPFVSPEKRGSLVLAIIAPAAIVSSCVLALVLVRKVQKRRLRAKKLLQQSRPSIWSNLSTLQTQQQLMAVRNRAFSTTLSDADIALLPQINWSQLKLLRFLGSGAFGEVYEGQLKTEDSEEPQRVAIKSLRKGASEFAELLQEAQLMSNFKHENIVCLVGICFDTESISLIMEHMEAGDLLSYLRAARATSTQEPQPTAGLSLSELLAMCIDVANGCSYLEDMHFVHRDLACRNCLVTESTGSTDRRRTVKIGDFGLARDIYKSDYYRKEGEGLLPVRWMSPESLVDGLFTTQSDVWAFGVLCWEILTLGQQPYAARNNFEVLAHVKEGGRLQQPPMCTEKLYSLLLLCWRTDPWERPSFRRCYNTLHAISTDLRRTQMASATADTVVSCSRPEFKVRFDGQPLEEHREHNERPEDENLTLREVPLKDKQLYANEGVSRL.

Polar residues predominate over residues 1–10; the sequence is MTMFWQQNVD. Residues 1–25 form a disordered region; sequence MTMFWQQNVDHQSDEQDKQAKGAAP. The Extracellular segment spans residues 1-2123; it reads MTMFWQQNVD…AEPFVSPEKR (2123 aa). Positions 11 to 20 are enriched in basic and acidic residues; sequence HQSDEQDKQA. The N-linked (GlcNAc...) asparagine glycan is linked to Asn-30. Residues 51–70 are compositionally biased toward low complexity; it reads NQQAPGTSSSSSNSQNASPS. Residues 51–75 are disordered; it reads NQQAPGTSSSSSNSQNASPSKIVVR. A glycan (N-linked (GlcNAc...) asparagine) is linked at Asn-129. Residues 181-208 are disordered; it reads SRPQSTMAHHPDDRDRDRDPSEEQHGVD. Basic and acidic residues predominate over residues 189–208; that stretch reads HHPDDRDRDRDPSEEQHGVD. Residues 440–533 enclose the Fibronectin type-III 1 domain; sequence APVIEHLMGL…GFVQTHSARN (94 aa). Asn-481, Asn-505, Asn-617, and Asn-647 each carry an N-linked (GlcNAc...) asparagine glycan. One can recognise a Fibronectin type-III 2 domain in the interval 824-924; that stretch reads AGGKPHSLKA…EPLAARTWPL (101 aa). Asn-966 carries an N-linked (GlcNAc...) asparagine glycan. An LDL-receptor class B repeat occupies 1010–1053; sequence GRVYWTDLARNCVVRMDPWSGSRELLPVFEANFLALDPRQGHLY. Fibronectin type-III domains follow at residues 1202 to 1290 and 1294 to 1397; these read LPDS…TPPV and QPRR…VAPE. 12 N-linked (GlcNAc...) asparagine glycosylation sites follow: Asn-1228, Asn-1313, Asn-1353, Asn-1550, Asn-1557, Asn-1639, Asn-1725, Asn-1756, Asn-1804, Asn-1889, Asn-1947, and Asn-2073. Fibronectin type-III domains lie at 1801–1901, 1902–1988, and 1995–2117; these read PPRN…SFAE, LPEL…VYET, and QPGK…AEPF. Residues 2124–2147 traverse the membrane as a helical segment; the sequence is GSLVLAIIAPAAIVSSCVLALVLV. Over 2148–2554 the chain is Cytoplasmic; the sequence is RKVQKRRLRA…LYANEGVSRL (407 aa). The region spanning 2209 to 2485 is the Protein kinase domain; that stretch reads LKLLRFLGSG…RCYNTLHAIS (277 aa). ATP-binding positions include 2215–2223 and Lys-2242; that span reads LGSGAFGEV. Asp-2343 (proton acceptor) is an active-site residue. Residue Tyr-2380 is modified to Phosphotyrosine; by autocatalysis. Positions 2515–2527 are enriched in basic and acidic residues; the sequence is GQPLEEHREHNER. The segment at 2515-2534 is disordered; it reads GQPLEEHREHNERPEDENLT.

It belongs to the protein kinase superfamily. Tyr protein kinase family. Insulin receptor subfamily. As to quaternary structure, may form a complex with drk and Sos. Binds the phosphotyrosine interaction domain (PID) of Dab.

It localises to the cell membrane. The catalysed reaction is L-tyrosyl-[protein] + ATP = O-phospho-L-tyrosyl-[protein] + ADP + H(+). Its function is as follows. Receptor for an extracellular signal required to instruct a cell to differentiate into an R7 photoreceptor. The ligand for sev is the boss (bride of sevenless) protein on the surface of the neighboring R8 cell. This Drosophila melanogaster (Fruit fly) protein is Protein sevenless (sev).